The sequence spans 932 residues: UPF0182 protein Syncc9902_1151 (932 aa).

9 helical membrane passes run Phe-4–Val-24, Met-40–Leu-60, Val-85–Ile-105, Met-124–Cys-144, Trp-151–Trp-171, Ile-201–Trp-221, Tyr-243–Leu-263, Leu-293–Leu-313, and Arg-315–Thr-335.

Belongs to the UPF0182 family.

The protein resides in the cell membrane. This chain is UPF0182 protein Syncc9902_1151, found in Synechococcus sp. (strain CC9902).